A 498-amino-acid polypeptide reads, in one-letter code: Flagellin (498 aa).

This sequence belongs to the bacterial flagellin family.

The protein localises to the secreted. It is found in the bacterial flagellum. In terms of biological role, flagellin is the subunit protein which polymerizes to form the filaments of bacterial flagella. The chain is Flagellin (fliC) from Escherichia coli (strain K12).